A 356-amino-acid polypeptide reads, in one-letter code: tRNA N6-adenosine threonylcarbamoyltransferase (356 aa).

Residues His-115 and His-119 each contribute to the Fe cation site. Substrate contacts are provided by residues 138–142 (LVSGG), Asp-171, Gly-184, and Asn-283. Asp-311 provides a ligand contact to Fe cation.

The protein belongs to the KAE1 / TsaD family. The cofactor is Fe(2+).

Its subcellular location is the cytoplasm. The enzyme catalyses L-threonylcarbamoyladenylate + adenosine(37) in tRNA = N(6)-L-threonylcarbamoyladenosine(37) in tRNA + AMP + H(+). In terms of biological role, required for the formation of a threonylcarbamoyl group on adenosine at position 37 (t(6)A37) in tRNAs that read codons beginning with adenine. Is involved in the transfer of the threonylcarbamoyl moiety of threonylcarbamoyl-AMP (TC-AMP) to the N6 group of A37, together with TsaE and TsaB. TsaD likely plays a direct catalytic role in this reaction. This Prochlorococcus marinus (strain NATL1A) protein is tRNA N6-adenosine threonylcarbamoyltransferase.